Here is a 96-residue protein sequence, read N- to C-terminus: Large ribosomal subunit protein bL21 (96 aa).

Basic residues predominate over residues K73 to H84. Residues K73–L96 form a disordered region. A compositionally biased stretch (polar residues) spans R85–L96.

This sequence belongs to the bacterial ribosomal protein bL21 family. Part of the 50S ribosomal subunit. Contacts protein L20.

This protein binds to 23S rRNA in the presence of protein L20. In Chlorobium luteolum (strain DSM 273 / BCRC 81028 / 2530) (Pelodictyon luteolum), this protein is Large ribosomal subunit protein bL21.